The sequence spans 350 residues: Ornithine carbamoyltransferase, mitochondrial (350 aa).

Residues 1–30 (MLHHMRTIINASWRYGNKCIVRQFGFSQTY) constitute a mitochondrion transit peptide. Residues 86–90 (STRTR), Arg-137, and His-164 each bind carbamoyl phosphate. An L-ornithine-binding site is contributed by Arg-137. L-ornithine contacts are provided by residues Asn-195, 259–263 (DTWVS), 298–301 (HCLP), and Arg-326. The active site involves Cys-299. Residue Arg-326 coordinates carbamoyl phosphate.

It belongs to the aspartate/ornithine carbamoyltransferase superfamily. OTCase family. Homotrimer. Liver.

The protein localises to the mitochondrion matrix. The enzyme catalyses carbamoyl phosphate + L-ornithine = L-citrulline + phosphate + H(+). It participates in nitrogen metabolism; urea cycle; L-citrulline from L-ornithine and carbamoyl phosphate: step 1/1. In terms of biological role, OTC is necessary for the tadpoles transition from an ammonotelic, aquatic larva to a ureotelic, terrestrial adult. This Aquarana catesbeiana (American bullfrog) protein is Ornithine carbamoyltransferase, mitochondrial.